The chain runs to 399 residues: Elongation factor Tu (399 aa).

The tr-type G domain occupies 10 to 204 (KPHVNIGTIG…AVDASIPEPE (195 aa)). The G1 stretch occupies residues 19–26 (GHVDHGKT). 19–26 (GHVDHGKT) lines the GTP pocket. Thr26 is a binding site for Mg(2+). Positions 60 to 64 (GITIN) are G2. Residues 81 to 84 (DCPG) are G3. Residues 81–85 (DCPGH) and 136–139 (NKCD) contribute to the GTP site. Residues 136–139 (NKCD) are G4. Residues 174–176 (SGL) are G5.

The protein belongs to the TRAFAC class translation factor GTPase superfamily. Classic translation factor GTPase family. EF-Tu/EF-1A subfamily. Monomer.

The protein resides in the cytoplasm. The enzyme catalyses GTP + H2O = GDP + phosphate + H(+). GTP hydrolase that promotes the GTP-dependent binding of aminoacyl-tRNA to the A-site of ribosomes during protein biosynthesis. In Prochlorococcus marinus (strain MIT 9312), this protein is Elongation factor Tu.